A 152-amino-acid chain; its full sequence is Small ribosomal subunit protein uS15 (152 aa).

The protein belongs to the universal ribosomal protein uS15 family. Part of the 30S ribosomal subunit.

The polypeptide is Small ribosomal subunit protein uS15 (Saccharolobus solfataricus (strain ATCC 35092 / DSM 1617 / JCM 11322 / P2) (Sulfolobus solfataricus)).